Reading from the N-terminus, the 187-residue chain is Large ribosomal subunit protein uL6 (187 aa).

A disordered region spans residues 159–187 (PYKGKGIRYKGEQLSSNPERLQVRSKEVR).

This sequence belongs to the universal ribosomal protein uL6 family. Part of the 50S ribosomal subunit.

Functionally, this protein binds to the 23S rRNA, and is important in its secondary structure. It is located near the subunit interface in the base of the L7/L12 stalk, and near the tRNA binding site of the peptidyltransferase center. The sequence is that of Large ribosomal subunit protein uL6 from Aquifex pyrophilus.